We begin with the raw amino-acid sequence, 693 residues long: Glycine--tRNA ligase beta subunit (693 aa).

This sequence belongs to the class-II aminoacyl-tRNA synthetase family. In terms of assembly, tetramer of two alpha and two beta subunits.

Its subcellular location is the cytoplasm. It catalyses the reaction tRNA(Gly) + glycine + ATP = glycyl-tRNA(Gly) + AMP + diphosphate. The sequence is that of Glycine--tRNA ligase beta subunit from Vibrio vulnificus (strain YJ016).